A 330-amino-acid polypeptide reads, in one-letter code: Biotin synthase (330 aa).

The region spanning 53–276 (NNIRLNVLLS…VFPFKELRLS (224 aa)) is the Radical SAM core domain. Residues Cys68, Cys72, and Cys75 each coordinate [4Fe-4S] cluster. Cys112, Cys144, Cys204, and Arg274 together coordinate [2Fe-2S] cluster.

This sequence belongs to the radical SAM superfamily. Biotin synthase family. Homodimer. The cofactor is [4Fe-4S] cluster. It depends on [2Fe-2S] cluster as a cofactor.

It carries out the reaction (4R,5S)-dethiobiotin + (sulfur carrier)-SH + 2 reduced [2Fe-2S]-[ferredoxin] + 2 S-adenosyl-L-methionine = (sulfur carrier)-H + biotin + 2 5'-deoxyadenosine + 2 L-methionine + 2 oxidized [2Fe-2S]-[ferredoxin]. The protein operates within cofactor biosynthesis; biotin biosynthesis; biotin from 7,8-diaminononanoate: step 2/2. Catalyzes the conversion of dethiobiotin (DTB) to biotin by the insertion of a sulfur atom into dethiobiotin via a radical-based mechanism. The sequence is that of Biotin synthase from Streptococcus agalactiae serotype III (strain NEM316).